A 311-amino-acid polypeptide reads, in one-letter code: 4-diphosphocytidyl-2-C-methyl-D-erythritol kinase (311 aa).

Lysine 16 is a catalytic residue. Position 100–110 (100–110 (PIGAGLAGGSS)) interacts with ATP. Aspartate 142 is a catalytic residue.

It belongs to the GHMP kinase family. IspE subfamily.

The enzyme catalyses 4-CDP-2-C-methyl-D-erythritol + ATP = 4-CDP-2-C-methyl-D-erythritol 2-phosphate + ADP + H(+). The protein operates within isoprenoid biosynthesis; isopentenyl diphosphate biosynthesis via DXP pathway; isopentenyl diphosphate from 1-deoxy-D-xylulose 5-phosphate: step 3/6. Its function is as follows. Catalyzes the phosphorylation of the position 2 hydroxy group of 4-diphosphocytidyl-2C-methyl-D-erythritol. The polypeptide is 4-diphosphocytidyl-2-C-methyl-D-erythritol kinase (Prochlorococcus marinus (strain MIT 9312)).